We begin with the raw amino-acid sequence, 319 residues long: Glycine--tRNA ligase alpha subunit (319 aa).

It belongs to the class-II aminoacyl-tRNA synthetase family. As to quaternary structure, tetramer of two alpha and two beta subunits.

It is found in the cytoplasm. It carries out the reaction tRNA(Gly) + glycine + ATP = glycyl-tRNA(Gly) + AMP + diphosphate. This is Glycine--tRNA ligase alpha subunit from Coxiella burnetii (strain CbuK_Q154) (Coxiella burnetii (strain Q154)).